Consider the following 347-residue polypeptide: Probable dual-specificity RNA methyltransferase RlmN (347 aa).

Glu-94 (proton acceptor) is an active-site residue. Residues 100–319 (YPSRTIACIS…LDTLVKNGID (220 aa)) enclose the Radical SAM core domain. A disulfide bridge connects residues Cys-107 and Cys-334. The [4Fe-4S] cluster site is built by Cys-114, Cys-118, and Cys-121. S-adenosyl-L-methionine-binding positions include 161–162 (GE), Ser-193, 216–218 (SLH), and Asn-292. Cys-334 serves as the catalytic S-methylcysteine intermediate.

It belongs to the radical SAM superfamily. RlmN family. Requires [4Fe-4S] cluster as cofactor.

The protein resides in the cytoplasm. The catalysed reaction is adenosine(2503) in 23S rRNA + 2 reduced [2Fe-2S]-[ferredoxin] + 2 S-adenosyl-L-methionine = 2-methyladenosine(2503) in 23S rRNA + 5'-deoxyadenosine + L-methionine + 2 oxidized [2Fe-2S]-[ferredoxin] + S-adenosyl-L-homocysteine. It catalyses the reaction adenosine(37) in tRNA + 2 reduced [2Fe-2S]-[ferredoxin] + 2 S-adenosyl-L-methionine = 2-methyladenosine(37) in tRNA + 5'-deoxyadenosine + L-methionine + 2 oxidized [2Fe-2S]-[ferredoxin] + S-adenosyl-L-homocysteine. Functionally, specifically methylates position 2 of adenine 2503 in 23S rRNA and position 2 of adenine 37 in tRNAs. The polypeptide is Probable dual-specificity RNA methyltransferase RlmN (Petrotoga mobilis (strain DSM 10674 / SJ95)).